The following is a 418-amino-acid chain: MLSPTNSISKTAPVPPQDSSKPVLISEEPQNQLLQKVARTALAVLLVVVTLGLILLFYSFSDLQSFPWCCQTRPSTKEQPTISIPVPLPSPPLAVPRPSTPPPPVISRPSTPPAPTPAISPPSTPSAPKPSTPPPLPPKAPKPVKTQEDLLPFVPEQVFVEMYEDMARRRIIEALVPAWDSDIIFKCLCYFHTLYQGLIPLETFPPATIFNFKQKIISILEDKKAVLRGEPIKGSLPICCSEENYRRHLQGTTLLPVFMWYHPTPKTLSDTMQTMKQLAIKGSVGASHWLLVIVDIQARRLVYFDSLYNYVMSPEDMKKDLQSFAQQLDQVYPAYDSQKFSVKIAAKEVIQKGSGSSCGAWCCQFLHWYLRDPFTDALNDLPVDSVERHENLASFVQACEAAVQDLPELFWPEAKALF.

Over residues 1–10 (MLSPTNSISK) the composition is skewed to polar residues. The disordered stretch occupies residues 1–23 (MLSPTNSISKTAPVPPQDSSKPV). The chain crosses the membrane as a helical span at residues 40 to 60 (TALAVLLVVVTLGLILLFYSF). Positions 72–144 (TRPSTKEQPT…PLPPKAPKPV (73 aa)) are disordered. The segment covering 86-141 (VPLPSPPLAVPRPSTPPPPVISRPSTPPAPTPAISPPSTPSAPKPSTPPPLPPKAP) has biased composition (pro residues). Active-site residues include His-288, Asp-305, and Cys-358.

It belongs to the peptidase C48 family.

Its subcellular location is the secreted. It is found in the host cell. The protein localises to the membrane. Its function is as follows. Effector proteins function to alter host cell physiology and promote bacterial survival in host tissues. This protease possesses deubiquitinating and deneddylating activities. This is Deubiquitinase and deneddylase Dub1 (cdu1) from Chlamydia trachomatis serovar B (strain TZ1A828/OT).